We begin with the raw amino-acid sequence, 365 residues long: UDP-N-acetylglucosamine--N-acetylmuramyl-(pentapeptide) pyrophosphoryl-undecaprenol N-acetylglucosamine transferase (365 aa).

UDP-N-acetyl-alpha-D-glucosamine-binding positions include 10 to 12 (TGG), asparagine 128, arginine 170, serine 199, isoleucine 250, and glutamine 295.

The protein belongs to the glycosyltransferase 28 family. MurG subfamily.

The protein localises to the cell inner membrane. It catalyses the reaction di-trans,octa-cis-undecaprenyl diphospho-N-acetyl-alpha-D-muramoyl-L-alanyl-D-glutamyl-meso-2,6-diaminopimeloyl-D-alanyl-D-alanine + UDP-N-acetyl-alpha-D-glucosamine = di-trans,octa-cis-undecaprenyl diphospho-[N-acetyl-alpha-D-glucosaminyl-(1-&gt;4)]-N-acetyl-alpha-D-muramoyl-L-alanyl-D-glutamyl-meso-2,6-diaminopimeloyl-D-alanyl-D-alanine + UDP + H(+). The protein operates within cell wall biogenesis; peptidoglycan biosynthesis. In terms of biological role, cell wall formation. Catalyzes the transfer of a GlcNAc subunit on undecaprenyl-pyrophosphoryl-MurNAc-pentapeptide (lipid intermediate I) to form undecaprenyl-pyrophosphoryl-MurNAc-(pentapeptide)GlcNAc (lipid intermediate II). The chain is UDP-N-acetylglucosamine--N-acetylmuramyl-(pentapeptide) pyrophosphoryl-undecaprenol N-acetylglucosamine transferase from Chlorobium luteolum (strain DSM 273 / BCRC 81028 / 2530) (Pelodictyon luteolum).